Consider the following 517-residue polypeptide: Type II methyltransferase M.CeqI (517 aa).

Disordered stretches follow at residues 1–21 (MVVT…RWPR) and 33–62 (GRPR…HGRS). The segment covering 51–62 (RPRRGRAPHGRS) has biased composition (basic residues). TPR repeat units lie at residues 283-316 (AEFY…FENN), 361-394 (ALLL…GDHS), and 476-509 (SELA…RTNM).

It carries out the reaction a 2'-deoxyadenosine in DNA + S-adenosyl-L-methionine = an N(6)-methyl-2'-deoxyadenosine in DNA + S-adenosyl-L-homocysteine + H(+). Functionally, a methylase, recognizes the double-stranded sequence 5'-GATATC-3', methylates A-? on both strands, and protects the DNA from cleavage by the CeqI endonuclease. The sequence is that of Type II methyltransferase M.CeqI (ceqIM) from Rhodococcus hoagii (Corynebacterium equii).